A 418-amino-acid polypeptide reads, in one-letter code: Tyrosine--tRNA ligase (418 aa).

An L-tyrosine-binding site is contributed by Tyr34. Positions 39 to 48 (PTADSLHLGH) match the 'HIGH' region motif. L-tyrosine is bound by residues Tyr169 and Gln173. Positions 229-233 (KFGKS) match the 'KMSKS' region motif. Lys232 serves as a coordination point for ATP. Residues 352–418 (LNIVDMLVTA…GKKKYAVLTY (67 aa)) form the S4 RNA-binding domain.

The protein belongs to the class-I aminoacyl-tRNA synthetase family. TyrS type 1 subfamily. Homodimer.

The protein resides in the cytoplasm. It carries out the reaction tRNA(Tyr) + L-tyrosine + ATP = L-tyrosyl-tRNA(Tyr) + AMP + diphosphate + H(+). In terms of biological role, catalyzes the attachment of tyrosine to tRNA(Tyr) in a two-step reaction: tyrosine is first activated by ATP to form Tyr-AMP and then transferred to the acceptor end of tRNA(Tyr). The protein is Tyrosine--tRNA ligase of Streptococcus equi subsp. zooepidemicus (strain H70).